Consider the following 152-residue polypeptide: SsrA-binding protein (152 aa).

Belongs to the SmpB family.

It is found in the cytoplasm. Required for rescue of stalled ribosomes mediated by trans-translation. Binds to transfer-messenger RNA (tmRNA), required for stable association of tmRNA with ribosomes. tmRNA and SmpB together mimic tRNA shape, replacing the anticodon stem-loop with SmpB. tmRNA is encoded by the ssrA gene; the 2 termini fold to resemble tRNA(Ala) and it encodes a 'tag peptide', a short internal open reading frame. During trans-translation Ala-aminoacylated tmRNA acts like a tRNA, entering the A-site of stalled ribosomes, displacing the stalled mRNA. The ribosome then switches to translate the ORF on the tmRNA; the nascent peptide is terminated with the 'tag peptide' encoded by the tmRNA and targeted for degradation. The ribosome is freed to recommence translation, which seems to be the essential function of trans-translation. The chain is SsrA-binding protein from Lactobacillus helveticus (strain DPC 4571).